The following is a 452-amino-acid chain: LIM/homeobox protein lim-7 (452 aa).

LIM zinc-binding domains are found at residues 54 to 116 (AVCA…LFTT) and 117 to 179 (RCSR…LDNP). The interval 184-268 (SVPDYSKLNN…KKKDKQATRV (85 aa)) is disordered. 2 stretches are compositionally biased toward low complexity: residues 192-205 (NNNN…SSSN) and 217-227 (TLTSLDNNTSS). The homeobox DNA-binding region spans 265–324 (ATRVRTVLNENQLKILRDCYSINSRPDATLKERLVEMTGLSARVIRVWFQNKRCKDKKRQ). Residues 347–376 (GIGPLMVQPATPHIDNTLGGPIDIQHFAQW) are LIM interaction domain (LID).

Interacts (via LID domain) with ceh-14 (via LIM zinc-binding domains 1 and 2). As to expression, expressed in gonadal sheath cells, URA motoneurons, and 10 additional cells near the isthmus and terminal bulb of the pharynx. Expressed in the ALA and BDU cells.

Its subcellular location is the nucleus. Its function is as follows. Probable DNA-binding transcriptional activator. The chain is LIM/homeobox protein lim-7 from Caenorhabditis elegans.